The chain runs to 348 residues: Dihydroorotase (348 aa).

Residues His-14 and His-16 each contribute to the Zn(2+) site. Substrate is bound by residues 16-18 and Asn-42; that span reads HLR. Residues Lys-100, His-137, and His-175 each contribute to the Zn(2+) site. Lys-100 is subject to N6-carboxylysine. His-137 is a binding site for substrate. Substrate is bound at residue Leu-220. Asp-248 provides a ligand contact to Zn(2+). Asp-248 is an active-site residue. Substrate contacts are provided by His-252 and Ala-264.

It belongs to the metallo-dependent hydrolases superfamily. DHOase family. Class II DHOase subfamily. Homodimer. Zn(2+) serves as cofactor.

The catalysed reaction is (S)-dihydroorotate + H2O = N-carbamoyl-L-aspartate + H(+). It participates in pyrimidine metabolism; UMP biosynthesis via de novo pathway; (S)-dihydroorotate from bicarbonate: step 3/3. Functionally, catalyzes the reversible cyclization of carbamoyl aspartate to dihydroorotate. The protein is Dihydroorotase of Pseudomonas paraeruginosa (strain DSM 24068 / PA7) (Pseudomonas aeruginosa (strain PA7)).